Consider the following 355-residue polypeptide: Sesquiterpene synthase MAJ_08936 (355 aa).

2 residues coordinate Mg(2+): D91 and D96. The DDXXXD motif motif lies at 91 to 96 (DDLFVD). R184 contacts substrate. Mg(2+) is bound by residues N230, S234, and E238.

Belongs to the terpene synthase family. Mg(2+) serves as cofactor.

The enzyme catalyses (2E,6E)-farnesyl diphosphate + H2O = (+)-corvol ether B + diphosphate. It carries out the reaction (2E,6E)-farnesyl diphosphate + H2O = (+)-corvol ether A + diphosphate. Its function is as follows. Terpene synthase that catalyzes the conversion of (2E,6E)-farnesyl diphosphate (FPP) into sesquiterpenes which are important for fungi-environment interactions. Produces a mixture consisting of 8 sesquiterpenes including corvol ethers A and B, as well as traces of epizonarene, gamma-cadinene, delta-cadinene, alpha-cadinene, alpha-cadinol, and an unidentified sesquiterpene. The major product is corvol ether A. In Metarhizium majus (strain ARSEF 297), this protein is Sesquiterpene synthase MAJ_08936.